A 347-amino-acid polypeptide reads, in one-letter code: NADH-ubiquinone oxidoreductase chain 2 (347 aa).

The next 10 helical transmembrane spans lie at 3-23 (PPILIIIMATIMTGTMIVMLS), 25-45 (HWLLIWIGFEMNMLAIIPILM), 66-86 (ASMLLMMGVTINLLYSGQWVI), 111-131 (FHFWVPEVTQGITLMSGMILL), 149-169 (INTNLLMLMALTSVLVGGWGG), 178-198 (IMAYSSIAHMGWMAAIITYNP), 201-221 (MVLNLTLYILMTLSTFMLFML), 237-257 (FPLITSMILILMLSLGGLPPL), 274-294 (NMIIIPTLMAITALLNLYFYL), and 325-345 (LLPPLIITSTMLLPLTPMLSV).

The protein belongs to the complex I subunit 2 family. In terms of assembly, core subunit of respiratory chain NADH dehydrogenase (Complex I) which is composed of 45 different subunits. Interacts with TMEM242.

It localises to the mitochondrion inner membrane. The enzyme catalyses a ubiquinone + NADH + 5 H(+)(in) = a ubiquinol + NAD(+) + 4 H(+)(out). Core subunit of the mitochondrial membrane respiratory chain NADH dehydrogenase (Complex I) which catalyzes electron transfer from NADH through the respiratory chain, using ubiquinone as an electron acceptor. Essential for the catalytic activity and assembly of complex I. The sequence is that of NADH-ubiquinone oxidoreductase chain 2 from Canis lupus familiaris (Dog).